The sequence spans 468 residues: PTS system mannitol-specific EIICB component (468 aa).

Residues 1–25 (MNNQPSFRARVQKFGSFLSGMIMPN) lie on the Cytoplasmic side of the membrane. Positions 14–344 (FGSFLSGMIM…ILKTSKATAE (331 aa)) constitute a PTS EIIC type-2 domain. The helical transmembrane segment at 26-47 (IGAFIAWGLITALFIPTGWWPN) threads the bilayer. Topologically, residues 48–51 (EQLA) are extracellular. The chain crosses the membrane as a helical span at residues 52-72 (ELVGPMITYLLPLLIGYTGGK). Residues 73 to 135 (MIYDVRGGVV…SGFEMLVNNF (63 aa)) lie on the Cytoplasmic side of the membrane. Residues 136–157 (SAGILAAILAIVAFLGIGPVVV) form a helical membrane-spanning segment. At 158–166 (SFSNVLASG) the chain is on the extracellular side. The helical transmembrane segment at 167-187 (VEVIIGAGLLPLASIFIEPAK) threads the bilayer. The Cytoplasmic segment spans residues 188–274 (VLFLNNAINH…ILMKPTLILA (87 aa)). The chain crosses the membrane as a helical span at residues 275–294 (VIAGGMSGVFTFVLFNAGLV). The Extracellular portion of the chain corresponds to 295–314 (AVPSPGSIFALLAMTPRGEY). A helical membrane pass occupies residues 315–336 (AGVLAGVIIATVVSFVIASIIL). Residues 337–468 (KTSKATAEDL…YDELVNRLKS (132 aa)) are Cytoplasmic-facing. The region spanning 380 to 468 (NKIIFACDAG…YDELVNRLKS (89 aa)) is the PTS EIIB type-2 domain. Catalysis depends on Cys386, which acts as the Phosphocysteine intermediate; for EIIB activity. Cys386 carries the post-translational modification Phosphocysteine; by EIIA.

As to quaternary structure, homodimer.

It localises to the cell membrane. The enzyme catalyses D-mannitol(out) + N(pros)-phospho-L-histidyl-[protein] = D-mannitol 1-phosphate(in) + L-histidyl-[protein]. Its function is as follows. The phosphoenolpyruvate-dependent sugar phosphotransferase system (sugar PTS), a major carbohydrate active transport system, catalyzes the phosphorylation of incoming sugar substrates concomitantly with their translocation across the cell membrane. The enzyme II CmtAB PTS system is involved in D-mannitol transport. This Halalkalibacterium halodurans (strain ATCC BAA-125 / DSM 18197 / FERM 7344 / JCM 9153 / C-125) (Bacillus halodurans) protein is PTS system mannitol-specific EIICB component (mtlA).